The primary structure comprises 517 residues: Protein translocase subunit SecD (517 aa).

Helical transmembrane passes span 5 to 25 (LRWI…FPLD), 357 to 377 (IWAG…YYKF), 380 to 400 (FIAS…MGMF), 407 to 427 (PGIA…VLIF), 455 to 475 (IIDS…FGTG), and 479 to 499 (GFAV…VTLS).

The protein belongs to the SecD/SecF family. SecD subfamily. As to quaternary structure, forms a complex with SecF. Part of the essential Sec protein translocation apparatus which comprises SecA, SecYEG and auxiliary proteins SecDF. Other proteins may also be involved.

The protein resides in the cell inner membrane. Part of the Sec protein translocase complex. Interacts with the SecYEG preprotein conducting channel. SecDF uses the proton motive force (PMF) to complete protein translocation after the ATP-dependent function of SecA. The sequence is that of Protein translocase subunit SecD from Calditerrivibrio nitroreducens (strain DSM 19672 / NBRC 101217 / Yu37-1).